A 97-amino-acid chain; its full sequence is Small nuclear ribonucleoprotein Sm D3 (97 aa).

The Sm domain maps to 3-75 (LCIKLLHETQ…IRFLIVPDML (73 aa)).

The protein belongs to the snRNP core protein family. As to quaternary structure, belongs to the 40S cdc5-associated complex (or cwf complex), a spliceosome sub-complex reminiscent of a late-stage spliceosome composed of the U2, U5 and U6 snRNAs and at least brr2, cdc5, cwf2/prp3, cwf3/syf1, cwf4/syf3, cwf5/ecm2, spp42/cwf6, cwf7/spf27, cwf8, cwf9, cwf10, cwf11, cwf12, prp45/cwf13, cwf14, cwf15, cwf16, cwf17, cwf18, cwf19, cwf20, cwf21, cwf22, cwf23, cwf24, cwf25, cwf26, cyp7/cwf27, cwf28, cwf29/ist3, lea1, msl1, prp5/cwf1, prp10, prp12/sap130, prp17, prp22, sap61, sap62, sap114, sap145, slu7, smb1, smd1, smd3, smf1, smg1 and syf2. Interacts with saf5; the interaction is direct.

Its subcellular location is the nucleus. It is found in the cytoplasm. The protein resides in the cytosol. Functionally, plays a role in pre-mRNA splicing as a core component of the spliceosomal U1, U2, U4 and U5 small nuclear ribonucleoproteins (snRNPs), the building blocks of the spliceosome. In Schizosaccharomyces pombe (strain 972 / ATCC 24843) (Fission yeast), this protein is Small nuclear ribonucleoprotein Sm D3 (smd3).